The sequence spans 181 residues: MTEEHVVLLDEQDKPSGTLEKYAAHTLNTPLHLAFSCWLFNEDGQLLVTRRSLSKKAWPGVWTNSVCGHPQQGETTEEAIIRRCRFELGVEITDLTPVYPHFSYRATDPNGIVENEVCPVFAARATSVLQVNSEEVMDYQWSEFKSVWKSLLATPWAFSPWMVMQASDEQARERLLDYCQR.

Positions 25 and 32 each coordinate Mn(2+). The Nudix hydrolase domain maps to P30–M164. C67 is an active-site residue. H69 lines the Mn(2+) pocket. E87 serves as a coordination point for Mg(2+). Positions 114 and 116 each coordinate Mn(2+). E116 is a catalytic residue.

Belongs to the IPP isomerase type 1 family. As to quaternary structure, homodimer. Mg(2+) is required as a cofactor. Mn(2+) serves as cofactor.

It localises to the cytoplasm. It catalyses the reaction isopentenyl diphosphate = dimethylallyl diphosphate. Its pathway is isoprenoid biosynthesis; dimethylallyl diphosphate biosynthesis; dimethylallyl diphosphate from isopentenyl diphosphate: step 1/1. Its function is as follows. Catalyzes the 1,3-allylic rearrangement of the homoallylic substrate isopentenyl (IPP) to its highly electrophilic allylic isomer, dimethylallyl diphosphate (DMAPP). The chain is Isopentenyl-diphosphate Delta-isomerase from Salmonella agona (strain SL483).